The sequence spans 407 residues: Argininosuccinate synthase (407 aa).

ATP-binding positions include Ala12–Ser20 and Ala39. Tyr90 and Ser95 together coordinate L-citrulline. ATP is bound at residue Gly120. Thr122, Asn126, and Asp127 together coordinate L-aspartate. Residue Asn126 coordinates L-citrulline. Residues Arg130, Ser181, Ser190, Glu266, and Tyr278 each coordinate L-citrulline.

This sequence belongs to the argininosuccinate synthase family. Type 1 subfamily. In terms of assembly, homotetramer.

Its subcellular location is the cytoplasm. It carries out the reaction L-citrulline + L-aspartate + ATP = 2-(N(omega)-L-arginino)succinate + AMP + diphosphate + H(+). It functions in the pathway amino-acid biosynthesis; L-arginine biosynthesis; L-arginine from L-ornithine and carbamoyl phosphate: step 2/3. This chain is Argininosuccinate synthase, found in Nitrosospira multiformis (strain ATCC 25196 / NCIMB 11849 / C 71).